The primary structure comprises 527 residues: MTDTAAQRHHRLQAHADLLTQTLRGIEKEGLRVDHQGVLARTAHPAGLGAALTNAHVTTDYSEALLELITGTHTDVDSLLGELRDTHRYVYGVLEGEYIWNQSMPATLPPEADIPIAWYGTSNTGMLKHVYRRGLAERYGKTMQCIAGVHYNFSLPDALWDVLVPDAPTPQARRSRGYISLIRNFTRYSWLLMYLFGSAPALAREFMRGRDHLLETLDPSTLYLPYATSLRMSDLGYQNKAQSRLKLCYNDLDTFLGRLYEAVTEPWPAYQAIGTRRDGQWIQLNTNVLQIENEYYSSIRPKRATGRCERPITALAERGVQYVEVRCLDIDPLTPEGISAETARFVDAFLLFCATSDSPFFPDNGYCQRSADNFAVVVKEGRKPGLMLDREGQAVSVPQWGHELLDQIAPYAALYDQALGGDAYAAALAAQRAKLDQPDLTPSARVLAALREGNVSFHDYSLDLSRRHADALRAQPLPAERTQAYAEAARQSVAEQLRLEQSDAVDFDTYVAHYHAALKNPLPSTAS.

It belongs to the glutamate--cysteine ligase type 1 family. Type 1 subfamily.

The catalysed reaction is L-cysteine + L-glutamate + ATP = gamma-L-glutamyl-L-cysteine + ADP + phosphate + H(+). Its pathway is sulfur metabolism; glutathione biosynthesis; glutathione from L-cysteine and L-glutamate: step 1/2. This is Glutamate--cysteine ligase from Bordetella bronchiseptica (strain ATCC BAA-588 / NCTC 13252 / RB50) (Alcaligenes bronchisepticus).